We begin with the raw amino-acid sequence, 303 residues long: Elongation factor Ts (303 aa).

The interval 79-82 (TDFT) is involved in Mg(2+) ion dislocation from EF-Tu.

The protein belongs to the EF-Ts family.

The protein localises to the cytoplasm. Functionally, associates with the EF-Tu.GDP complex and induces the exchange of GDP to GTP. It remains bound to the aminoacyl-tRNA.EF-Tu.GTP complex up to the GTP hydrolysis stage on the ribosome. The protein is Elongation factor Ts of Magnetococcus marinus (strain ATCC BAA-1437 / JCM 17883 / MC-1).